A 1312-amino-acid chain; its full sequence is DNA repair protein RAD50 (1312 aa).

Arginine 13, asparagine 38, glycine 39, glycine 41, lysine 42, threonine 43, threonine 44, valine 67, aspartate 69, and glutamine 159 together coordinate ATP. Threonine 43 lines the Mg(2+) pocket. Residue glutamine 159 participates in Mg(2+) binding. 3 coiled-coil regions span residues 228–359, 401–598, and 635–673; these read TSKE…QADR, RERQ…AKLN, and SQDF…ITQL. Residue serine 635 is modified to Phosphoserine; by ATM. One can recognise a Zinc-hook domain in the interval 635–734; sequence SQDFESDLDR…RRDEMLGLVP (100 aa). Positions 681 and 684 each coordinate Zn(2+). Threonine 690 carries the post-translational modification Phosphothreonine. 2 coiled-coil regions span residues 706-734 and 789-1079; these read RLAP…GLVP and LTDV…GRQK. At lysine 959 the chain carries N6-acetyllysine.

The protein belongs to the SMC family. RAD50 subfamily. As to quaternary structure, component of the MRN complex composed of two heterodimers RAD50 and MRE11 associated with a single NBN. The MRN complexes dimerize on DNA to form joined MRN-MRN oligomers required for DNA double-strand break repair. As part of the MRN complex, interacts with MCM8 and MCM9; the interaction recruits the complex to DNA repair sites. Component of the BASC complex, at least composed of BRCA1, MSH2, MSH6, MLH1, ATM, BLM, RAD50, MRE11 and NBN. Found in a complex with TERF2. Interacts with RINT1. Interacts with BRCA1 via its N-terminal domain. Interacts with DCLRE1C/Artemis. Interacts with MRNIP. Interacts with CYREN (via XLF motif). Interacts with C1QBP and MRE11; interaction takes place in absence of DNA damage to form the MRC (MRE11-RAD50-C1QBP) complex that inhibits the activity of MRE11. (Microbial infection) Interacts with herpes simplex virus 1 protein UL12. Requires Zn(2+) as cofactor. Phosphorylation at Ser-635 by ATM in response to DNA damage is required for double-strand break (DSB) repair. Expressed at very low level in most tissues, except in testis where it is expressed at higher level. Expressed in fibroblasts.

Its subcellular location is the nucleus. It is found in the chromosome. The protein resides in the telomere. The catalysed reaction is ATP + H2O = ADP + phosphate + H(+). Its function is as follows. Component of the MRN complex, which plays a central role in double-strand break (DSB) repair, DNA recombination, maintenance of telomere integrity and meiosis. The MRN complex is involved in the repair of DNA double-strand breaks (DSBs) via homologous recombination (HR), an error-free mechanism which primarily occurs during S and G2 phases. The complex (1) mediates the end resection of damaged DNA, which generates proper single-stranded DNA, a key initial steps in HR, and is (2) required for the recruitment of other repair factors and efficient activation of ATM and ATR upon DNA damage. The MRN complex possesses single-strand endonuclease activity and double-strand-specific 3'-5' exonuclease activity, which are provided by MRE11, to initiate end resection, which is required for single-strand invasion and recombination. Within the complex, RAD50 is both required to bind DNA ends and hold them in close proximity and regulate the activity of MRE11. RAD50 provides an ATP-dependent control of MRE11 by positioning DNA ends into the MRE11 active site: ATP-binding induces a large structural change from an open form with accessible MRE11 nuclease sites into a closed form. The MRN complex is also required for DNA damage signaling via activation of the ATM and ATR kinases: the nuclease activity of MRE11 is not required to activate ATM and ATR. The MRN complex is also required for the processing of R-loops. In telomeres the MRN complex may modulate t-loop formation. In Homo sapiens (Human), this protein is DNA repair protein RAD50.